We begin with the raw amino-acid sequence, 75 residues long: U6-lycotoxin-Ls1c (75 aa).

A signal peptide spans 1–21 (MKLLLFTALVLVVISLIEVEA). Residues 22–25 (ENER) constitute a propeptide that is removed on maturation. 4 cysteine pairs are disulfide-bonded: Cys-27–Cys-42, Cys-34–Cys-47, Cys-41–Cys-65, and Cys-49–Cys-63.

This sequence belongs to the neurotoxin 19 (CSTX) family. 06 (U6-Lctx) subfamily. As to expression, expressed by the venom gland.

It is found in the secreted. The sequence is that of U6-lycotoxin-Ls1c from Lycosa singoriensis (Wolf spider).